The following is a 233-amino-acid chain: ATP synthase subunit a (233 aa).

A run of 5 helical transmembrane segments spans residues 29–49, 86–106, 118–135, 188–208, and 209–229; these read FKHVFYTWCAMAILFSLGLIV, VFPLLGGIFLFILFQNLLGLV, TNAAMALFVFGYYNYQGL, VLFFLMAPIVGTLPVYFLFLL, and GKVLQAFIFFMLTMVYLKGAF.

This sequence belongs to the ATPase A chain family. As to quaternary structure, F-type ATPases have 2 components, CF(1) - the catalytic core - and CF(0) - the membrane proton channel. CF(1) has five subunits: alpha(3), beta(3), gamma(1), delta(1), epsilon(1). CF(0) has three main subunits: a(1), b(2) and c(9-12). The alpha and beta chains form an alternating ring which encloses part of the gamma chain. CF(1) is attached to CF(0) by a central stalk formed by the gamma and epsilon chains, while a peripheral stalk is formed by the delta and b chains.

The protein localises to the cell inner membrane. Its function is as follows. Key component of the proton channel; it plays a direct role in the translocation of protons across the membrane. The polypeptide is ATP synthase subunit a (Nitratidesulfovibrio vulgaris (strain ATCC 29579 / DSM 644 / CCUG 34227 / NCIMB 8303 / VKM B-1760 / Hildenborough) (Desulfovibrio vulgaris)).